The primary structure comprises 115 residues: Protein Wnt-2 (115 aa).

Serine 1 carries O-palmitoleoyl serine; by PORCN lipidation. The cysteines at positions 81 and 96 are disulfide-linked. N-linked (GlcNAc...) asparagine glycosylation occurs at asparagine 82.

The protein belongs to the Wnt family. In terms of processing, palmitoleoylation is required for efficient binding to frizzled receptors. Depalmitoleoylation leads to Wnt signaling pathway inhibition.

Its subcellular location is the secreted. The protein localises to the extracellular space. The protein resides in the extracellular matrix. Its function is as follows. Ligand for members of the frizzled family of seven transmembrane receptors. Probable developmental protein. May be a signaling molecule which affects the development of discrete regions of tissues. Is likely to signal over only few cell diameters. In Strongylocentrotus purpuratus (Purple sea urchin), this protein is Protein Wnt-2 (WNT-2).